The sequence spans 831 residues: Probable glucan 1,3-beta-glucosidase D (831 aa).

6 stretches are compositionally biased toward basic and acidic residues: residues M1–V24, R44–E56, R79–A93, S102–R115, R137–A151, and Q198–K213. 2 disordered regions span residues M1–H179 and H192–K241. At M1–K297 the chain is on the cytoplasmic side. A helical; Signal-anchor for type II membrane protein transmembrane segment spans residues W298–V318. At M319–Y831 the chain is on the extracellular side. N-linked (GlcNAc...) asparagine glycosylation is found at N376, N381, N393, N410, N442, N546, and N558. E597 acts as the Proton donor in catalysis. Residues N610, N636, N669, and N689 are each glycosylated (N-linked (GlcNAc...) asparagine). E702 functions as the Nucleophile in the catalytic mechanism.

It belongs to the glycosyl hydrolase 5 (cellulase A) family.

The protein localises to the cell membrane. It catalyses the reaction Successive hydrolysis of beta-D-glucose units from the non-reducing ends of (1-&gt;3)-beta-D-glucans, releasing alpha-glucose.. Its function is as follows. Glucosidase involved in the degradation of cellulosic biomass. Active on lichenan. This is Probable glucan 1,3-beta-glucosidase D (exgD) from Aspergillus flavus (strain ATCC 200026 / FGSC A1120 / IAM 13836 / NRRL 3357 / JCM 12722 / SRRC 167).